A 347-amino-acid chain; its full sequence is Protein RecA (347 aa).

66–73 (GPESSGKT) is a binding site for ATP.

This sequence belongs to the RecA family.

The protein localises to the cytoplasm. Can catalyze the hydrolysis of ATP in the presence of single-stranded DNA, the ATP-dependent uptake of single-stranded DNA by duplex DNA, and the ATP-dependent hybridization of homologous single-stranded DNAs. It interacts with LexA causing its activation and leading to its autocatalytic cleavage. The sequence is that of Protein RecA from Methylococcus capsulatus (strain ATCC 33009 / NCIMB 11132 / Bath).